The chain runs to 461 residues: ATP-dependent protease ATPase subunit HslU (461 aa).

ATP contacts are provided by residues valine 21, 63–68 (GVGKTE), aspartate 274, glutamate 339, and arginine 411.

Belongs to the ClpX chaperone family. HslU subfamily. In terms of assembly, a double ring-shaped homohexamer of HslV is capped on each side by a ring-shaped HslU homohexamer. The assembly of the HslU/HslV complex is dependent on binding of ATP.

It is found in the cytoplasm. Its function is as follows. ATPase subunit of a proteasome-like degradation complex; this subunit has chaperone activity. The binding of ATP and its subsequent hydrolysis by HslU are essential for unfolding of protein substrates subsequently hydrolyzed by HslV. HslU recognizes the N-terminal part of its protein substrates and unfolds these before they are guided to HslV for hydrolysis. This chain is ATP-dependent protease ATPase subunit HslU, found in Caldanaerobacter subterraneus subsp. tengcongensis (strain DSM 15242 / JCM 11007 / NBRC 100824 / MB4) (Thermoanaerobacter tengcongensis).